A 447-amino-acid chain; its full sequence is MPLDEFEFSVLKTIQTHHLIFPGHKVLVALSGGMDSMSLLNILLKLRQKLNCEIFAAHLNHMIRENAIRDEQFVYSYCKKAGVKIFVERFDVPKFCADRKIGIEEGARAARYTFLNRIAHENGIDLIALAHNLNDLVETILYRIVRGTGLSGIVCMKLKDENKIRPLLYFKREQIEAYIKRNNIPYVQDETNFNLKYSRNYIRHRIVPALKLLNSDLENAFSQVHFSGMMLENHVKRLIKKYSERIFRCGKRIIFDSKDMDEFEIIELVKYCAGQMNVDLNYRQIQLVVSKLNENSWSIDLSEDIAIKKGFDFFSIEKKCKFMNILKVGKPGVYKFNDWTFELSSEVKSNEYVFIHDQGGVCIRKRKAGEKIAGVKMKDMMIDSKIPAFLRDEMPVVCTIDRIIWVPYVYVDRCFKERKEDSLVLNLLQNPYSCILELRKDERRKMV.

31–36 (SGGMDS) serves as a coordination point for ATP.

It belongs to the tRNA(Ile)-lysidine synthase family.

It is found in the cytoplasm. It carries out the reaction cytidine(34) in tRNA(Ile2) + L-lysine + ATP = lysidine(34) in tRNA(Ile2) + AMP + diphosphate + H(+). Its function is as follows. Ligates lysine onto the cytidine present at position 34 of the AUA codon-specific tRNA(Ile) that contains the anticodon CAU, in an ATP-dependent manner. Cytidine is converted to lysidine, thus changing the amino acid specificity of the tRNA from methionine to isoleucine. The chain is tRNA(Ile)-lysidine synthase from Pseudothermotoga lettingae (strain ATCC BAA-301 / DSM 14385 / NBRC 107922 / TMO) (Thermotoga lettingae).